A 317-amino-acid chain; its full sequence is uncharacterized protein (317 aa).

The region spanning 29-86 (IDLNLLTIFEAVYVHKGIVNAAKVLNLTPSAISQSIQKLRVIFPDPLFIRKGQGVTPT) is the HTH lysR-type domain. The segment at residues 46–65 (IVNAAKVLNLTPSAISQSIQ) is a DNA-binding region (H-T-H motif).

The protein belongs to the LysR transcriptional regulatory family.

This is an uncharacterized protein from Escherichia coli (strain K12).